Consider the following 181-residue polypeptide: Acireductone dioxygenase (181 aa).

The Fe(2+) site is built by histidine 100, histidine 102, glutamate 106, and histidine 145. Positions 100, 102, 106, and 145 each coordinate Ni(2+).

This sequence belongs to the acireductone dioxygenase (ARD) family. As to quaternary structure, monomer. Fe(2+) is required as a cofactor. It depends on Ni(2+) as a cofactor.

It catalyses the reaction 1,2-dihydroxy-5-(methylsulfanyl)pent-1-en-3-one + O2 = 3-(methylsulfanyl)propanoate + CO + formate + 2 H(+). The enzyme catalyses 1,2-dihydroxy-5-(methylsulfanyl)pent-1-en-3-one + O2 = 4-methylsulfanyl-2-oxobutanoate + formate + 2 H(+). Its pathway is amino-acid biosynthesis; L-methionine biosynthesis via salvage pathway; L-methionine from S-methyl-5-thio-alpha-D-ribose 1-phosphate: step 5/6. In terms of biological role, catalyzes 2 different reactions between oxygen and the acireductone 1,2-dihydroxy-3-keto-5-methylthiopentene (DHK-MTPene) depending upon the metal bound in the active site. Fe-containing acireductone dioxygenase (Fe-ARD) produces formate and 2-keto-4-methylthiobutyrate (KMTB), the alpha-ketoacid precursor of methionine in the methionine recycle pathway. Ni-containing acireductone dioxygenase (Ni-ARD) produces methylthiopropionate, carbon monoxide and formate, and does not lie on the methionine recycle pathway. This is Acireductone dioxygenase from Trichodesmium erythraeum (strain IMS101).